Consider the following 49-residue polypeptide: Light-harvesting protein B-880 alpha chain (49 aa).

Residues 1–12 are Cytoplasmic-facing; the sequence is MYKLWLLFDPRR. The chain crosses the membrane as a helical span at residues 13-33; that stretch reads TLVALSAFLFVLGLIIHFISL. His-29 contributes to the a bacteriochlorophyll binding site. The Periplasmic segment spans residues 34 to 49; that stretch reads STDRFNWLEGKPAVRA.

The protein belongs to the antenna complex alpha subunit family. The core complex is formed by different alpha and beta chains, binding bacteriochlorophyll molecules, and arranged most probably in tetrameric structures disposed around the reaction center. The non-pigmented gamma chains may constitute additional components.

The protein resides in the cell inner membrane. In terms of biological role, antenna complexes are light-harvesting systems, which transfer the excitation energy to the reaction centers. The polypeptide is Light-harvesting protein B-880 alpha chain (Rhodoblastus acidophilus (Rhodopseudomonas acidophila)).